Consider the following 103-residue polypeptide: Integration host factor subunit beta (103 aa).

A disordered region spans residues Arg-62 to Lys-81.

The protein belongs to the bacterial histone-like protein family. As to quaternary structure, heterodimer of an alpha and a beta chain.

This protein is one of the two subunits of integration host factor, a specific DNA-binding protein that functions in genetic recombination as well as in transcriptional and translational control. The protein is Integration host factor subunit beta of Xanthomonas campestris pv. campestris (strain B100).